Here is a 416-residue protein sequence, read N- to C-terminus: Serine hydroxymethyltransferase (416 aa).

Residues leucine 119 and glycine 123 to leucine 125 contribute to the (6S)-5,6,7,8-tetrahydrofolate site. N6-(pyridoxal phosphate)lysine is present on lysine 228.

The protein belongs to the SHMT family. As to quaternary structure, homodimer. Requires pyridoxal 5'-phosphate as cofactor.

The protein resides in the cytoplasm. The catalysed reaction is (6R)-5,10-methylene-5,6,7,8-tetrahydrofolate + glycine + H2O = (6S)-5,6,7,8-tetrahydrofolate + L-serine. Its pathway is one-carbon metabolism; tetrahydrofolate interconversion. It functions in the pathway amino-acid biosynthesis; glycine biosynthesis; glycine from L-serine: step 1/1. Its function is as follows. Catalyzes the reversible interconversion of serine and glycine with tetrahydrofolate (THF) serving as the one-carbon carrier. This reaction serves as the major source of one-carbon groups required for the biosynthesis of purines, thymidylate, methionine, and other important biomolecules. Also exhibits THF-independent aldolase activity toward beta-hydroxyamino acids, producing glycine and aldehydes, via a retro-aldol mechanism. The protein is Serine hydroxymethyltransferase of Moorella thermoacetica (strain ATCC 39073 / JCM 9320).